A 334-amino-acid polypeptide reads, in one-letter code: tRNA N6-adenosine threonylcarbamoyltransferase (334 aa).

Positions 110 and 114 each coordinate Fe cation. Residues 133-137 (IVSGG), aspartate 166, glycine 179, aspartate 183, and asparagine 275 each bind substrate. Residue aspartate 303 participates in Fe cation binding.

The protein belongs to the KAE1 / TsaD family. Fe(2+) is required as a cofactor.

It localises to the cytoplasm. It catalyses the reaction L-threonylcarbamoyladenylate + adenosine(37) in tRNA = N(6)-L-threonylcarbamoyladenosine(37) in tRNA + AMP + H(+). Its function is as follows. Required for the formation of a threonylcarbamoyl group on adenosine at position 37 (t(6)A37) in tRNAs that read codons beginning with adenine. Is involved in the transfer of the threonylcarbamoyl moiety of threonylcarbamoyl-AMP (TC-AMP) to the N6 group of A37, together with TsaE and TsaB. TsaD likely plays a direct catalytic role in this reaction. In Salinibacter ruber (strain DSM 13855 / M31), this protein is tRNA N6-adenosine threonylcarbamoyltransferase.